Consider the following 205-residue polypeptide: Methylthioribulose-1-phosphate dehydratase (205 aa).

Histidine 96 and histidine 98 together coordinate Zn(2+).

It belongs to the aldolase class II family. MtnB subfamily. Zn(2+) is required as a cofactor.

The enzyme catalyses 5-(methylsulfanyl)-D-ribulose 1-phosphate = 5-methylsulfanyl-2,3-dioxopentyl phosphate + H2O. Its pathway is amino-acid biosynthesis; L-methionine biosynthesis via salvage pathway; L-methionine from S-methyl-5-thio-alpha-D-ribose 1-phosphate: step 2/6. Functionally, catalyzes the dehydration of methylthioribulose-1-phosphate (MTRu-1-P) into 2,3-diketo-5-methylthiopentyl-1-phosphate (DK-MTP-1-P). The protein is Methylthioribulose-1-phosphate dehydratase of Pseudomonas paraeruginosa (strain DSM 24068 / PA7) (Pseudomonas aeruginosa (strain PA7)).